We begin with the raw amino-acid sequence, 325 residues long: Aminotransferase tasG (325 aa).

Gly35 lines the substrate pocket. Pyridoxal 5'-phosphate is bound by residues 89 to 90 (TW), Asn143, Tyr174, and 203 to 205 (SFA). Asn143 lines the substrate pocket. Lys206 is subject to N6-(pyridoxal phosphate)lysine. Arg214 contacts pyridoxal 5'-phosphate.

It belongs to the class-I pyridoxal-phosphate-dependent aminotransferase family. As to quaternary structure, homodimer. Pyridoxal 5'-phosphate is required as a cofactor.

Its pathway is secondary metabolite biosynthesis. Its function is as follows. Aminotransferase; part of the gene cluster that mediates the biosynthesis of the tetramic acids Sch210971 and Sch210972, potential anti-HIV fungal natural product that contain a decalin core. The PKS module of tasS together with the enoylreductase tasC catalyze the formation of the polyketide unit which is then conjugated to 4-hydroxyl-4-methyl glutamate (HMG) by the condensation domain of the tasS NRPS module. One unique structural feature of Sch210971 and Sch210972 is the tetramic acid motif proposed to be derived from the non-proteinogenic amino acid HMG, by a Dieckmann-type condensation catalyzed by the reductase domain of tasS. The aldolase tasA catalyzes the aldol condensation of 2 molecules of pyruvic acid to yield the intermediate 4-hydroxyl-4-methyl-2-oxoglutarate (HMOG), which can then be stereoselectively transaminated, may be by tasG, to form HMG. The Diels-Alderase tas3 then uses the Dieckmann product of tasS as substrate and catalyzes the Diels-Alder cycloaddition to form the decalin ring of Sch210971 and Sch210972. In Hapsidospora irregularis, this protein is Aminotransferase tasG.